Consider the following 538-residue polypeptide: MKAFPVICLGFAIFSSSICVNINILQQIGYIKQQVRQLSYYSQSSSSYVVVKLLPNIQPTDNSCEFKSVTQYNKTLSNLLLPIAENINNITSPSPGSRRHKRFAGIAIGIAALGVATAAQVTAAVSLVQAQTNARAIAAMKNSIQATNRAVFEVKEGTQQLAIAVQAIQDHINTIMNTQLNNMSCQILDNQLATSLGLYLTELTTVFQPQLINPALSPISIQALRSLLGSMTPAVVQATLSTSISAAEILSAGLMEGQIVSVLLDEMQMIVKINVPTIVTQSNALVIDFYSISSFINNQESIIQLPDRILEIGNEQWRYPAKNCKLTRHHIFCQYNEAERLSLETKLCLAGNISACVFSSIAGSYMRRFVALDGTIVANCRSLTCLCKSPSYPIYQPDHHAVTTIDLTSCQTLSLDGLDFSIVSLSNITYAENLTISLSQTINTQPIDISTELSKVNASLQNAVKYIKESNHQLQSVSVSSKIGAIIVAALVLSILSIIISLLFCFWAYIATKEIRRINFKTNHINTISSSVDDLIRY.

The signal sequence occupies residues 1–19; the sequence is MKAFPVICLGFAIFSSSIC. Residues 20 to 486 lie on the Extracellular side of the membrane; the sequence is VNINILQQIG…VSVSSKIGAI (467 aa). N-linked (GlcNAc...) asparagine; by host glycosylation is found at Asn56, Asn73, and Asn89. A fusion peptide region spans residues 103–127; that stretch reads FAGIAIGIAALGVATAAQVTAAVSL. A coiled-coil region spans residues 128-156; that stretch reads VQAQTNARAIAAMKNSIQATNRAVFEVKE. The N-linked (GlcNAc...) asparagine; by host glycan is linked to Asn182. 4 disulfides stabilise this stretch: Cys324–Cys333, Cys348–Cys356, Cys380–Cys385, and Cys387–Cys410. The N-linked (GlcNAc...) asparagine; by host glycan is linked to Asn352. N-linked (GlcNAc...) asparagine; by host glycosylation is found at Asn427, Asn433, and Asn457. Residues 452-477 adopt a coiled-coil conformation; that stretch reads ELSKVNASLQNAVKYIKESNHQLQSV. The chain crosses the membrane as a helical span at residues 487-507; the sequence is IVAALVLSILSIIISLLFCFW. Residues 508–538 are Cytoplasmic-facing; the sequence is AYIATKEIRRINFKTNHINTISSSVDDLIRY.

The protein belongs to the paramyxoviruses fusion glycoprotein family. In terms of assembly, homotrimer; disulfide-linked F1-F2. Interacts with host LAMP1; LAMP2 and LAMP3; these interactions promote the cleavage of the viral fusion protein F. Post-translationally, the inactive precursor F0 is glycosylated and proteolytically cleaved into F1 and F2 to be functionally active. The cleavage is mediated by cellular proteases including host FURIN during the transport and maturation of the polypeptide.

The protein resides in the virion membrane. It is found in the host cell membrane. Class I viral fusion protein. Under the current model, the protein has at least 3 conformational states: pre-fusion native state, pre-hairpin intermediate state, and post-fusion hairpin state. During viral and plasma cell membrane fusion, the heptad repeat (HR) regions assume a trimer-of-hairpins structure, positioning the fusion peptide in close proximity to the C-terminal region of the ectodomain. The formation of this structure appears to drive apposition and subsequent fusion of viral and plasma cell membranes. Directs fusion of viral and cellular membranes leading to delivery of the nucleocapsid into the cytoplasm. This fusion is pH independent and occurs directly at the outer cell membrane. The trimer of F1-F2 (F protein) probably interacts with HN at the virion surface. Upon HN binding to its cellular receptor, the hydrophobic fusion peptide is unmasked and interacts with the cellular membrane, inducing the fusion between cell and virion membranes. Later in infection, F proteins expressed at the plasma membrane of infected cells could mediate fusion with adjacent cells to form syncytia, a cytopathic effect that could lead to tissue necrosis. This Homo sapiens (Human) protein is Fusion glycoprotein F0 (F).